The sequence spans 187 residues: Proline-rich protein 29 (187 aa).

The segment at 133 to 187 (HQPPWQGEPRIQHQPPASRQEEVRDVPPPPPPSATGTVGADVPPASDYYDAESLP) is disordered.

The sequence is that of Proline-rich protein 29 (Prr29) from Mus musculus (Mouse).